The sequence spans 348 residues: UPF0324 membrane protein BH02290 (348 aa).

A run of 11 helical transmembrane segments spans residues 13–35 (AFLN…AYGL), 45–67 (QAWL…CFTL), 74–96 (GITF…SISV), 106–128 (LLAS…GRLF), 135–157 (AMLV…APVI), 167–189 (SIAF…HPFL), 196–218 (YGVL…ASVS), 223–245 (QIAT…ALSI), 257–275 (LHTL…MLIR), 285–307 (LIPI…GLGV), and 319–341 (VILA…IQLN).

Belongs to the UPF0324 family.

It localises to the cell membrane. The polypeptide is UPF0324 membrane protein BH02290 (Bartonella henselae (strain ATCC 49882 / DSM 28221 / CCUG 30454 / Houston 1) (Rochalimaea henselae)).